The primary structure comprises 31 residues: LysM-domain containing protein (31 aa).

Residues 1 to 28 form a LysM 1 repeat; the sequence is YSPSLTDLQSYNAMNGPALKAGDILAVP.

This is LysM-domain containing protein from Jatropha curcas (Barbados nut).